The chain runs to 344 residues: Uroporphyrinogen decarboxylase (344 aa).

Residues 25–29, aspartate 75, tyrosine 152, serine 207, and histidine 323 contribute to the substrate site; that span reads RQAGR.

Belongs to the uroporphyrinogen decarboxylase family. Homodimer.

The protein resides in the cytoplasm. The catalysed reaction is uroporphyrinogen III + 4 H(+) = coproporphyrinogen III + 4 CO2. It functions in the pathway porphyrin-containing compound metabolism; protoporphyrin-IX biosynthesis; coproporphyrinogen-III from 5-aminolevulinate: step 4/4. Functionally, catalyzes the decarboxylation of four acetate groups of uroporphyrinogen-III to yield coproporphyrinogen-III. This Roseobacter denitrificans (strain ATCC 33942 / OCh 114) (Erythrobacter sp. (strain OCh 114)) protein is Uroporphyrinogen decarboxylase.